A 291-amino-acid polypeptide reads, in one-letter code: Phosphatidylglycerol--prolipoprotein diacylglyceryl transferase (291 aa).

A run of 4 helical transmembrane segments spans residues 24–44 (WYAL…RALL), 64–84 (FILW…VLFY), 100–120 (WNGG…VILF), and 125–145 (GLPI…GLFL). Arg147 is an a 1,2-diacyl-sn-glycero-3-phospho-(1'-sn-glycerol) binding site. 3 helical membrane passes run 187-207 (AALE…LGAL), 211-231 (GLVL…AEFF), and 247-267 (MGML…YAAW).

It belongs to the Lgt family.

Its subcellular location is the cell inner membrane. It catalyses the reaction L-cysteinyl-[prolipoprotein] + a 1,2-diacyl-sn-glycero-3-phospho-(1'-sn-glycerol) = an S-1,2-diacyl-sn-glyceryl-L-cysteinyl-[prolipoprotein] + sn-glycerol 1-phosphate + H(+). The protein operates within protein modification; lipoprotein biosynthesis (diacylglyceryl transfer). Its function is as follows. Catalyzes the transfer of the diacylglyceryl group from phosphatidylglycerol to the sulfhydryl group of the N-terminal cysteine of a prolipoprotein, the first step in the formation of mature lipoproteins. The sequence is that of Phosphatidylglycerol--prolipoprotein diacylglyceryl transferase from Nitrobacter winogradskyi (strain ATCC 25391 / DSM 10237 / CIP 104748 / NCIMB 11846 / Nb-255).